Consider the following 825-residue polypeptide: Breast cancer anti-estrogen resistance protein 3 (825 aa).

A2 is subject to N-acetylalanine. 3 positions are modified to phosphoserine: S32, S78, and S83. The interval 40 to 106 is disordered; sequence DAYQDVSIHG…DRHGETFTFR (67 aa). Residues 79-94 show a composition bias toward polar residues; that stretch reads PRQNSPVTQDGIQESP. Positions 95 to 106 are enriched in basic and acidic residues; that stretch reads WQDRHGETFTFR. The 100-residue stretch at 154–253 folds into the SH2 domain; it reads WYHGRIPRQV…QSGAIIFQPI (100 aa). Phosphoserine occurs at positions 182 and 290. An N6-methyllysine modification is found at K334. S358, S363, and S375 each carry phosphoserine. Omega-N-methylarginine is present on R442. The residue at position 471 (S471) is a Phosphoserine. The Ras-GEF domain occupies 548–818; the sequence is DPKVIAQHVL…TALSRKLEPP (271 aa). The tract at residues 744–748 is mediates the interaction with BCAR1/p130CAS; sequence LATAR.

Part of a complex comprised of PTPRA, BCAR1, BCAR3 (via SH2 domain) and SRC; the formation of the complex is dependent on integrin mediated-tyrosine phosphorylation of PTPRA. Within the complex, interacts (via SH2 domain) with PTPRA (when phosphorylated on 'Tyr-798'). Interacts (via Ras-GEF domain) with BCAR1. Interacts (via Ras-GEF domain) with NEDD9. Interacts with PTK2/FAK1. Interacts with PTPN1. Interacts (via SH2 domain) with EGFR (when tyrosine-phosphorylated). In terms of processing, phosphorylated on tyrosine residues. Ubiquitously expressed. Found in several cancer cell lines, but not in nonmalignant breast tissue.

The protein resides in the cytoplasm. Its subcellular location is the cell junction. It localises to the focal adhesion. Acts as an adapter protein downstream of several growth factor receptors to promote cell proliferation, migration, and redistribution of actin fibers. Specifically involved in INS/insulin signaling pathway by mediating MAPK1/ERK2-MAPK3/ERK1 activation and DNA synthesis. Promotes insulin-mediated membrane ruffling. In response to vasoconstrictor peptide EDN1, involved in the activation of RAP1 downstream of PTK2B via interaction with phosphorylated BCAR1. Inhibits cell migration and invasion via regulation of TGFB-mediated matrix digestion, actin filament rearrangement, and inhibition of invadopodia activity. May inhibit TGFB-SMAD signaling, via facilitating BCAR1 and SMAD2 and/or SMAD3 interaction. Regulates EGF-induced DNA synthesis. Required for the maintenance of ocular lens morphology and structural integrity, potentially via regulation of focal adhesion complex signaling. Acts upstream of PTPRA to regulate the localization of BCAR1 and PTPRA to focal adhesions, via regulation of SRC-mediated phosphorylation of PTPRA. Positively regulates integrin-induced tyrosine phosphorylation of BCAR1. Acts as a guanine nucleotide exchange factor (GEF) for small GTPases RALA, RAP1A and RRAS. However, in a contrasting study, lacks GEF activity towards RAP1. The protein is Breast cancer anti-estrogen resistance protein 3 (BCAR3) of Homo sapiens (Human).